A 217-amino-acid polypeptide reads, in one-letter code: Large ribosomal subunit protein uL1 (217 aa).

Belongs to the universal ribosomal protein uL1 family. As to quaternary structure, part of the 50S ribosomal subunit.

Its function is as follows. Binds directly to 23S rRNA. The L1 stalk is quite mobile in the ribosome, and is involved in E site tRNA release. In terms of biological role, protein L1 is also a translational repressor protein, it controls the translation of the L11 operon by binding to its mRNA. The sequence is that of Large ribosomal subunit protein uL1 from Anaplasma marginale (strain St. Maries).